We begin with the raw amino-acid sequence, 1406 residues long: DNA topoisomerase 2 (1406 aa).

ATP contacts are provided by residues N69, N98, 126 to 128 (SSN), and 139 to 146 (GRNGYGAK). Residues 332–334 (KKK) form an interaction with DNA region. Position 363–365 (363–365 (QTK)) interacts with ATP. The Toprim domain occupies 441-555 (CTLILTEGDS…GLLDIPGFLI (115 aa)). Mg(2+) is bound by residues E447, D524, and D526. A Topo IIA-type catalytic domain is found at 690-1159 (IPSVLDGFKP…SAKDLWNNDL (470 aa)). Residue Y780 is the O-(5'-phospho-DNA)-tyrosine intermediate of the active site. The segment at 963–972 (KLISPISLQN) is interaction with DNA. Over residues 1079–1089 (EDEDEDLEESE) the composition is skewed to acidic residues. Disordered stretches follow at residues 1079–1106 (EDED…VNGP), 1183–1215 (KTKG…KKIK), 1230–1287 (KIKA…DESG), and 1303–1406 (DEDA…FNDE). The span at 1090 to 1100 (EATRKKDKDDE) shows a compositional bias: basic and acidic residues. Positions 1204–1214 (KKKPARRIKKI) are enriched in basic residues. Polar residues predominate over residues 1261–1274 (DVTSNASTPSTTIF). A compositionally biased stretch (basic residues) spans 1326-1336 (AKKKAPPKRKA). Acidic residues-rich tracts occupy residues 1341-1359 (SSED…DEEV) and 1381-1406 (EISD…FNDE).

Belongs to the type II topoisomerase family. As to quaternary structure, homodimer. Requires Mg(2+) as cofactor. The cofactor is Mn(2+). Ca(2+) is required as a cofactor.

The protein resides in the nucleus. The enzyme catalyses ATP-dependent breakage, passage and rejoining of double-stranded DNA.. In terms of biological role, control of topological states of DNA by transient breakage and subsequent rejoining of DNA strands. Topoisomerase II makes double-strand breaks. The polypeptide is DNA topoisomerase 2 (TOP2) (Candida glabrata (strain ATCC 2001 / BCRC 20586 / JCM 3761 / NBRC 0622 / NRRL Y-65 / CBS 138) (Yeast)).